Reading from the N-terminus, the 343-residue chain is Heat-inducible transcription repressor HrcA (343 aa).

Belongs to the HrcA family.

Negative regulator of class I heat shock genes (grpE-dnaK-dnaJ and groELS operons). Prevents heat-shock induction of these operons. In Caldanaerobacter subterraneus subsp. tengcongensis (strain DSM 15242 / JCM 11007 / NBRC 100824 / MB4) (Thermoanaerobacter tengcongensis), this protein is Heat-inducible transcription repressor HrcA.